A 430-amino-acid chain; its full sequence is Adenylosuccinate synthetase (430 aa).

GTP-binding positions include 13-19 (GDEGKGK) and 41-43 (GHT). Asp-14 acts as the Proton acceptor in catalysis. Residues Asp-14 and Gly-41 each coordinate Mg(2+). IMP-binding positions include 14–17 (DEGK), 39–42 (NAGH), Thr-130, Arg-144, Gln-225, Thr-240, and Arg-304. His-42 acts as the Proton donor in catalysis. 300-306 (STTGRKR) is a substrate binding site. Residues Arg-306, 332–334 (KLD), and 414–416 (STG) each bind GTP.

It belongs to the adenylosuccinate synthetase family. As to quaternary structure, homodimer. Mg(2+) serves as cofactor.

The protein resides in the cytoplasm. The catalysed reaction is IMP + L-aspartate + GTP = N(6)-(1,2-dicarboxyethyl)-AMP + GDP + phosphate + 2 H(+). It participates in purine metabolism; AMP biosynthesis via de novo pathway; AMP from IMP: step 1/2. Plays an important role in the de novo pathway of purine nucleotide biosynthesis. Catalyzes the first committed step in the biosynthesis of AMP from IMP. This is Adenylosuccinate synthetase from Buchnera aphidicola subsp. Schizaphis graminum (strain Sg).